Reading from the N-terminus, the 193-residue chain is Early light-induced protein 2, chloroplastic (193 aa).

The transit peptide at 1 to 43 (MATASFNMQSVFAAPSGVLTTRNIRNTNQLFFKRIAPVGVRCM) directs the protein to the chloroplast. Residues 46–80 (GDPIKEDPSVPSTSTSATPPQMPQSPPPPVSKPKV) form a disordered region. Over residues 54–64 (SVPSTSTSATP) the composition is skewed to low complexity. The span at 65-76 (PQMPQSPPPPVS) shows a compositional bias: pro residues. A run of 3 helical transmembrane segments spans residues 102–122 (LAMVGFVAAIAMELSKGENVF), 129–149 (GVGWFLGTTALLTLASMVPLF), and 173–193 (FAMLGLVALAFTEYVTGGTLV).

It belongs to the ELIP/psbS family.

It is found in the plastid. The protein resides in the chloroplast thylakoid membrane. Probably involved in the integration of pigments into the mature light-harvesting pigment-protein complexes. Light-harvesting chlorophyll (LHC) a/b-binding protein required to ensure a high rate of chlorophyll accumulation during deetiolation in continuous high light. Involved in seed germination. May fulfill a photoprotective functions. Prevents excess accumulation of free chlorophyll by inhibiting the entire chlorophyll biosynthesis pathway (e.g. 5-aminolevulinate synthesis and Mg-protoporphyrin IX chelatase activity), and hence prevent photooxidative stress. This Arabidopsis thaliana (Mouse-ear cress) protein is Early light-induced protein 2, chloroplastic.